The following is a 263-amino-acid chain: MKNAFKDALKAGRPQIGLWLGLANSYSAELLAGAGFDWLLIDGEHAPNNVQTVLTQLQAIAPYPSQPVVRPSWNDPVQIKQLLDVGAQTLLIPMVQNADEARNAVAATRYPPAGIRGVGSALARASRWNRIPDYLHQANDAMCVLVQIETREAMSNLASILDVDGIDGVFIGPADLSADMGFAGNPQHPEVQAAIENAIVQIRAAGKAPGILMANEALAKRYLELGALFVAVGVDTTLLARGAEALAARFGVEKKLSGASGVY.

H45 acts as the Proton acceptor in catalysis. Q147 is a binding site for substrate. E149 contacts a divalent metal cation. The substrate site is built by A174 and D175. A divalent metal cation is bound at residue D175.

The protein belongs to the HpcH/HpaI aldolase family. As to quaternary structure, homohexamer; trimer of dimers. A divalent metal cation serves as cofactor.

The catalysed reaction is 4-hydroxy-2-oxoheptanedioate = succinate semialdehyde + pyruvate. The protein operates within aromatic compound metabolism; 4-hydroxyphenylacetate degradation; pyruvate and succinate semialdehyde from 4-hydroxyphenylacetate: step 7/7. Catalyzes the reversible retro-aldol cleavage of 4-hydroxy-2-ketoheptane-1,7-dioate (HKHD) to pyruvate and succinic semialdehyde. The chain is 4-hydroxy-2-oxo-heptane-1,7-dioate aldolase from Salmonella newport (strain SL254).